The following is a 631-amino-acid chain: Pescadillo homolog (631 aa).

The 94-residue stretch at 321–414 (RLRNLFKGLK…QLLPTNKYFL (94 aa)) folds into the BRCT domain. 2 disordered regions span residues 450–469 (HAQS…EDDT) and 489–569 (EYKK…MVKP). 2 positions are modified to phosphoserine: Ser453 and Ser457. 2 stretches are compositionally biased toward acidic residues: residues 454–469 (DDES…EDDT) and 499–524 (VNED…EELD). The stretch at 510–541 (FDGEQESDEEEEELDEKTKRLQEEKKKMSVQS) forms a coiled coil. A compositionally biased stretch (basic and acidic residues) spans 525–536 (EKTKRLQEEKKK). Positions 543 to 552 (KVHKVNKRQL) are enriched in basic residues. Positions 553-562 (HKAEVDEHRL) are enriched in basic and acidic residues.

Belongs to the pescadillo family.

It localises to the nucleus. The protein resides in the nucleolus. It is found in the nucleoplasm. Required for maturation of ribosomal RNAs and formation of the large ribosomal subunit. This Drosophila mojavensis (Fruit fly) protein is Pescadillo homolog.